Here is a 129-residue protein sequence, read N- to C-terminus: Small ribosomal subunit protein uS11 (129 aa).

This sequence belongs to the universal ribosomal protein uS11 family. As to quaternary structure, part of the 30S ribosomal subunit. Interacts with proteins S7 and S18. Binds to IF-3.

Functionally, located on the platform of the 30S subunit, it bridges several disparate RNA helices of the 16S rRNA. Forms part of the Shine-Dalgarno cleft in the 70S ribosome. This is Small ribosomal subunit protein uS11 from Azoarcus sp. (strain BH72).